The sequence spans 166 residues: Nascent polypeptide-associated complex subunit beta (166 aa).

2 disordered regions span residues 1–40 and 129–166; these read MVLN…EDPK and HAAS…DKLD. One can recognise an NAC-A/B domain in the interval 35–100; the sequence is GGEDPKLQAA…GVDKELTELV (66 aa). A compositionally biased stretch (acidic residues) spans 141 to 153; sequence DDDDVPDVVENFD. Residues 154-166 are compositionally biased toward basic and acidic residues; it reads EADKKETEVDKLD.

This sequence belongs to the NAC-beta family. In terms of assembly, part of the nascent polypeptide-associated complex (NAC), consisting of EGD2 and EGD1. NAC associates with ribosomes via EGD1.

It is found in the cytoplasm. Its subcellular location is the nucleus. Component of the nascent polypeptide-associated complex (NAC), a dynamic component of the ribosomal exit tunnel, protecting the emerging polypeptides from interaction with other cytoplasmic proteins to ensure appropriate nascent protein targeting. The NAC complex also promotes mitochondrial protein import by enhancing productive ribosome interactions with the outer mitochondrial membrane and blocks the inappropriate interaction of ribosomes translating non-secretory nascent polypeptides with translocation sites in the membrane of the endoplasmic reticulum. EGD1 may act as a transcription factor that exert a negative effect on the expression of several genes that are transcribed by RNA polymerase II. This Mycosarcoma maydis (Corn smut fungus) protein is Nascent polypeptide-associated complex subunit beta (EGD1).